Consider the following 131-residue polypeptide: Small ribosomal subunit protein uS8 (131 aa).

Belongs to the universal ribosomal protein uS8 family. In terms of assembly, part of the 30S ribosomal subunit. Contacts proteins S5 and S12.

In terms of biological role, one of the primary rRNA binding proteins, it binds directly to 16S rRNA central domain where it helps coordinate assembly of the platform of the 30S subunit. This Polaromonas sp. (strain JS666 / ATCC BAA-500) protein is Small ribosomal subunit protein uS8.